Here is an 899-residue protein sequence, read N- to C-terminus: Auxin response factor 25 (899 aa).

The interval 1–20 (MKLSPPASADMPQALPENDG) is disordered. The segment at residues 132–234 (FCKTLTASDT…QLLLGIRRAN (103 aa)) is a DNA-binding region (TF-B3). Residues 546–564 (RQHVLQEQSSQEMQQQLPS) are compositionally biased toward low complexity. Residues 546–586 (RQHVLQEQSSQEMQQQLPSSDHHVADVASESGSAPQAQSSL) are disordered. Residues 575–586 (ESGSAPQAQSSL) are compositionally biased toward polar residues. The PB1 domain maps to 766 to 850 (ATFVKVYKSG…WCIKILSPQE (85 aa)).

Belongs to the ARF family. Homodimers and heterodimers. Expressed in roots, culms, leaves and young panicles.

It is found in the nucleus. In terms of biological role, auxin response factors (ARFs) are transcriptional factors that bind specifically to the DNA sequence 5'-TGTCTC-3' found in the auxin-responsive promoter elements (AuxREs). This is Auxin response factor 25 (ARF25) from Oryza sativa subsp. japonica (Rice).